The primary structure comprises 414 residues: Serine hydroxymethyltransferase (414 aa).

(6S)-5,6,7,8-tetrahydrofolate is bound by residues L121 and 125 to 127; that span reads GHL. At K229 the chain carries N6-(pyridoxal phosphate)lysine.

Belongs to the SHMT family. In terms of assembly, homodimer. Pyridoxal 5'-phosphate is required as a cofactor.

The protein localises to the cytoplasm. It carries out the reaction (6R)-5,10-methylene-5,6,7,8-tetrahydrofolate + glycine + H2O = (6S)-5,6,7,8-tetrahydrofolate + L-serine. It participates in one-carbon metabolism; tetrahydrofolate interconversion. It functions in the pathway amino-acid biosynthesis; glycine biosynthesis; glycine from L-serine: step 1/1. Catalyzes the reversible interconversion of serine and glycine with tetrahydrofolate (THF) serving as the one-carbon carrier. This reaction serves as the major source of one-carbon groups required for the biosynthesis of purines, thymidylate, methionine, and other important biomolecules. Also exhibits THF-independent aldolase activity toward beta-hydroxyamino acids, producing glycine and aldehydes, via a retro-aldol mechanism. The polypeptide is Serine hydroxymethyltransferase (Polynucleobacter asymbioticus (strain DSM 18221 / CIP 109841 / QLW-P1DMWA-1) (Polynucleobacter necessarius subsp. asymbioticus)).